The following is a 338-amino-acid chain: Endonuclease V (338 aa).

Asp52 and Asp126 together coordinate Mg(2+). The interval 253–338 is disordered; that stretch reads QLGVAPAQRK…PSPAWVQSPP (86 aa). Composition is skewed to basic and acidic residues over residues 260 to 270 and 287 to 323; these read QRKDRSQKEQR and RPPECDGRDSSSDRKAPEPGFQEQKDQQLEGTGHQED. The span at 328–338 shows a compositional bias: pro residues; the sequence is PPSPAWVQSPP.

This sequence belongs to the endonuclease V family. As to quaternary structure, monomer. Interacts with PABPC1; the interaction is RNA-dependent and stimulates ENDOV activity. Mg(2+) is required as a cofactor. In terms of tissue distribution, highest levels detected in liver with high levels also found in heart, kidney and testis. Expressed at low levels in brain.

It localises to the cytoplasm. Its subcellular location is the nucleus. The protein resides in the nucleolus. The protein localises to the stress granule. Endoribonuclease that specifically cleaves inosine-containing RNAs: cleaves RNA at the second phosphodiester bond 3' to inosine. Active against both single-stranded and double-stranded RNAs. Has strong preference for single-stranded RNAs (ssRNAs) toward double-stranded RNAs (dsRNAs). Cleaves mRNAs and tRNAs containing inosine. Also able to cleave structure-specific dsRNA substrates containing the specific sites 5'-IIUI-3' and 5'-UIUU-3'. Inosine is present in a number of RNAs following editing; the function of inosine-specific endoribonuclease is still unclear: it could either play a regulatory role in edited RNAs, or be involved in antiviral response by removing the hyperedited long viral dsRNA genome that has undergone A-to-I editing. Binds branched DNA structures. This is Endonuclease V (Endov) from Mus musculus (Mouse).